The following is a 198-amino-acid chain: Recombination protein RecR (198 aa).

The C4-type zinc finger occupies cysteine 57–cysteine 72. Residues aspartate 80–proline 175 enclose the Toprim domain.

The protein belongs to the RecR family.

Its function is as follows. May play a role in DNA repair. It seems to be involved in an RecBC-independent recombinational process of DNA repair. It may act with RecF and RecO. The chain is Recombination protein RecR from Chromobacterium violaceum (strain ATCC 12472 / DSM 30191 / JCM 1249 / CCUG 213 / NBRC 12614 / NCIMB 9131 / NCTC 9757 / MK).